Reading from the N-terminus, the 404-residue chain is WD repeat and SOCS box-containing protein 2 (404 aa).

7 WD repeats span residues glycine 16–tryptophan 55, glycine 81–valine 140, leucine 144–leucine 183, lysine 188–methionine 226, threonine 230–proline 268, aspartate 283–leucine 322, and lysine 325–alanine 362. The tract at residues alanine 68–threonine 87 is disordered. Positions histidine 356 to phenylalanine 404 constitute an SOCS box domain.

It functions in the pathway protein modification; protein ubiquitination. Functionally, may be a substrate-recognition component of a SCF-like ECS (Elongin-Cullin-SOCS-box protein) E3 ubiquitin ligase complex which mediates the ubiquitination and subsequent proteasomal degradation of target proteins. The polypeptide is WD repeat and SOCS box-containing protein 2 (WSB2) (Homo sapiens (Human)).